Consider the following 955-residue polypeptide: Coiled-coil domain-containing protein 146 (955 aa).

Positions 1–17 (MEDSSTDTEKEEEEEKD) are enriched in acidic residues. Positions 1–22 (MEDSSTDTEKEEEEEKDEKDQE) are disordered. 5 coiled-coil regions span residues 114–141 (EAFS…KERE), 169–321 (GEME…AREN), 400–461 (STLS…LLRM), 534–640 (KAHQ…RNES), and 667–832 (NGEI…MKQA).

As to quaternary structure, interacts with CCDC38 and CCDC42. Interacts with intraflagellar transport proteins IFT20 and IFT88. (Microbial infection) Interacts with Chlamydia trachomatis incM/YT288. In host cells infected with C.trachomatis incM, CCDC146 is recruited to the periphery of the pathogen-containing vacuole but recruitment is not dependent on incM. In terms of tissue distribution, widely expressed.

The protein localises to the cytoplasm. It is found in the cytoskeleton. Its subcellular location is the microtubule organizing center. The protein resides in the centrosome. It localises to the centriole. The protein localises to the flagellum axoneme. It is found in the cilium basal body. Its subcellular location is the midbody. Its function is as follows. Essential for sperm flagellum biogenesis and male fertility. This chain is Coiled-coil domain-containing protein 146 (CCDC146), found in Homo sapiens (Human).